The sequence spans 260 residues: Recombination-promoting nuclease RpnD (260 aa).

Belongs to the Rpn/YhgA-like nuclease family.

In terms of biological role, a low activity DNA endonuclease probably yielding 3'-hydroxyl ends. Involved in RecA-independent recombination and horizontal gene transfer. This chain is Recombination-promoting nuclease RpnD (rpnD), found in Escherichia coli O157:H7.